A 208-amino-acid chain; its full sequence is Thymidylate kinase (208 aa).

Residue 10–17 (GPDGSGKT) participates in ATP binding.

Belongs to the thymidylate kinase family.

The enzyme catalyses dTMP + ATP = dTDP + ADP. In terms of biological role, phosphorylation of dTMP to form dTDP in both de novo and salvage pathways of dTTP synthesis. The chain is Thymidylate kinase from Listeria welshimeri serovar 6b (strain ATCC 35897 / DSM 20650 / CCUG 15529 / CIP 8149 / NCTC 11857 / SLCC 5334 / V8).